Reading from the N-terminus, the 467-residue chain is UTP--glucose-1-phosphate uridylyltransferase (467 aa).

Residues 83–86 (LNGG), lysine 97, glutamine 160, and glycine 189 each bind UTP. Residue 85–86 (GG) participates in substrate binding. Residues histidine 190 and 218 to 220 (NSD) contribute to the substrate site. Residues aspartate 220 and lysine 358 each coordinate UTP.

This sequence belongs to the UDPGP type 1 family.

The protein resides in the cytoplasm. The catalysed reaction is alpha-D-glucose 1-phosphate + UTP + H(+) = UDP-alpha-D-glucose + diphosphate. Its function is as follows. Plays a central role as a glucosyl donor in cellular metabolic pathways. The sequence is that of UTP--glucose-1-phosphate uridylyltransferase (UGPA) from Musa acuminata (Banana).